Reading from the N-terminus, the 242-residue chain is ATP-dependent dethiobiotin synthetase BioD (242 aa).

12-17 (EVGKTV) is a binding site for ATP. Threonine 16 is a binding site for Mg(2+). Lysine 37 is a catalytic residue. A substrate-binding site is contributed by serine 41. ATP is bound by residues aspartate 51 and 112 to 115 (EGAG). Mg(2+) is bound by residues aspartate 51 and glutamate 112.

The protein belongs to the dethiobiotin synthetase family. As to quaternary structure, homodimer. Mg(2+) is required as a cofactor.

It is found in the cytoplasm. It carries out the reaction (7R,8S)-7,8-diammoniononanoate + CO2 + ATP = (4R,5S)-dethiobiotin + ADP + phosphate + 3 H(+). Its pathway is cofactor biosynthesis; biotin biosynthesis; biotin from 7,8-diaminononanoate: step 1/2. Its function is as follows. Catalyzes a mechanistically unusual reaction, the ATP-dependent insertion of CO2 between the N7 and N8 nitrogen atoms of 7,8-diaminopelargonic acid (DAPA, also called 7,8-diammoniononanoate) to form a ureido ring. The sequence is that of ATP-dependent dethiobiotin synthetase BioD from Bacillus cereus (strain ATCC 14579 / DSM 31 / CCUG 7414 / JCM 2152 / NBRC 15305 / NCIMB 9373 / NCTC 2599 / NRRL B-3711).